The primary structure comprises 122 residues: Putative iron-sulfur cluster insertion protein ErpA (122 aa).

Cys50, Cys114, and Cys116 together coordinate iron-sulfur cluster.

Belongs to the HesB/IscA family. As to quaternary structure, homodimer. The cofactor is iron-sulfur cluster.

Functionally, required for insertion of 4Fe-4S clusters. The protein is Putative iron-sulfur cluster insertion protein ErpA of Cupriavidus necator (strain ATCC 17699 / DSM 428 / KCTC 22496 / NCIMB 10442 / H16 / Stanier 337) (Ralstonia eutropha).